Here is a 277-residue protein sequence, read N- to C-terminus: Probable endonuclease 4 (277 aa).

The Zn(2+) site is built by His70, His108, Glu145, Asp178, His181, His212, Asp225, His227, and Glu257.

Belongs to the AP endonuclease 2 family. Requires Zn(2+) as cofactor.

It carries out the reaction Endonucleolytic cleavage to 5'-phosphooligonucleotide end-products.. Endonuclease IV plays a role in DNA repair. It cleaves phosphodiester bonds at apurinic or apyrimidinic (AP) sites, generating a 3'-hydroxyl group and a 5'-terminal sugar phosphate. This Mycoplasmopsis pulmonis (strain UAB CTIP) (Mycoplasma pulmonis) protein is Probable endonuclease 4.